A 254-amino-acid chain; its full sequence is MLAVLLFAALVATAYSQSNYGPGKPDVKIIPHPKTVVHEDARHVHKQVHLVKQVPVHRTRVQTIINEVPRIVTKPKKIKRTRIFRQYYPVDVPVIRRVTYLQPVHLERKVPVARMVVKDVPHHVVRTKKVDVPIDVPIKKIVEKKVVRYVENKIFRPRPVVQEKVRVVHVPKPFPVDRVIVQKNPRPRIIVEKKAVPVIRHIHTHKKQAVAVPRVKTVAEVVPNVVHQKVTYPVGKGGGSVQIPGGPLPVPEKF.

The first 16 residues, 1–16 (MLAVLLFAALVATAYS), serve as a signal peptide directing secretion.

As to expression, prismatic layer of shell (at protein level). Expressed primarily in the mantle with highest level in the outer epithelium of the mantle edge and lower level in the mantle pallium.

The protein localises to the secreted. This is Mantle protein from Margaritifera margaritifera (Freshwater pearl mussel).